The primary structure comprises 484 residues: UDP-N-acetylmuramate--L-alanine ligase (484 aa).

126-132 contributes to the ATP binding site; it reads GTHGKTT.

Belongs to the MurCDEF family.

It is found in the cytoplasm. It carries out the reaction UDP-N-acetyl-alpha-D-muramate + L-alanine + ATP = UDP-N-acetyl-alpha-D-muramoyl-L-alanine + ADP + phosphate + H(+). Its pathway is cell wall biogenesis; peptidoglycan biosynthesis. Its function is as follows. Cell wall formation. The protein is UDP-N-acetylmuramate--L-alanine ligase of Aeromonas hydrophila subsp. hydrophila (strain ATCC 7966 / DSM 30187 / BCRC 13018 / CCUG 14551 / JCM 1027 / KCTC 2358 / NCIMB 9240 / NCTC 8049).